The sequence spans 1291 residues: Ethylene-insensitive protein 2.2 (1291 aa).

A run of 6 helical transmembrane segments spans residues 18-38 (ALPALGPGLLIAIGYVDPGKW), 48-68 (FGFDLVLPMLIFNFVAILCQY), 96-116 (FLGVQAALSVIALDLTMILGI), 128-148 (LSTCVFLAAVDAVLFPVFATL), 155-175 (SFLSTCIAGFLLLLYFFGVLI), and 195-215 (SAFALMSLLGASIMPHNFFLH). A glycan (N-linked (GlcNAc...) asparagine) is linked at N227. 7 helical membrane-spanning segments follow: residues 231–251 (GALCLNHFFAILCIFSGIYLV), 253–273 (YVLMNSAANVFYSTGLVLLTF), 288–308 (VALCVFSLILFFANHITALTW), 335–355 (IIAVVPALYCVWTSGVEGIYQ), 356–376 (LLIFTQVMVALLLPSSVIPLF), 393–413 (FLEFLALISFMGMLGIKIIFV), and 441–461 (VLLITACSSFCLMLWLAATPL). The interval 498–518 (TEEESIGGQEQLSGPGKSAES) is disordered. N550 carries N-linked (GlcNAc...) asparagine glycosylation. The disordered stretch occupies residues 614 to 662 (AEKEDDEGDSWEPEESSKGVPGSTSSLTSDGPGSFRSLSGKSDEGGNGA). Over residues 617-627 (EDDEGDSWEPE) the composition is skewed to acidic residues. The span at 635–653 (GSTSSLTSDGPGSFRSLSG) shows a compositional bias: polar residues. Phosphoserine is present on residues S647 and S664. Disordered regions lie at residues 742–768 (QIHSSLGDSPNHLRVPSNIDSSYGGQR) and 787–808 (GPSRSIADSSERRYSSVHTLPS). A compositionally biased stretch (polar residues) spans 759-768 (NIDSSYGGQR). T818 is subject to Phosphothreonine. The tract at residues 836–856 (GSSSLNGQMDSPAPISPSLGP) is disordered. N891 is a glycosylation site (N-linked (GlcNAc...) asparagine). Phosphoserine is present on S923. N1027 is a glycosylation site (N-linked (GlcNAc...) asparagine). The interval 1210–1229 (HRSSPPVSNGMLPPASKPGR) is disordered. Positions 1262–1269 (DVAFPKGK) match the Nuclear localization signal motif.

It belongs to the NRAMP (TC 2.A.55) family.

Its subcellular location is the endoplasmic reticulum membrane. The protein resides in the nucleus. The protein localises to the cytoplasm. Central factor in signaling pathways regulated by ethylene (ET) and involved in various processes including development, plant defense, senescence, nucleotide sugar flux, and tropisms. Its function is as follows. Trafficking signal inducing ethylene response. The nuclear localization is both necessary and sufficient to activate EIN3-mediated transcription and ethylene responses. This is Ethylene-insensitive protein 2.2 from Populus trichocarpa (Western balsam poplar).